The primary structure comprises 407 residues: Obg-like ATPase homolog (407 aa).

In terms of domain architecture, OBG-type G spans 46 to 301 (LKIGIVGMPN…LTPEEAAQEC (256 aa)). ATP contacts are provided by residues 55 to 60 (NIGKST) and Met249. Positions 322 to 405 (NLIHYFTASE…EPGDIIFWKI (84 aa)) constitute a TGS domain.

Belongs to the TRAFAC class OBG-HflX-like GTPase superfamily. OBG GTPase family.

Its function is as follows. Hydrolyzes ATP, and can also hydrolyze GTP with lower efficiency. Has lower affinity for GTP. The chain is Obg-like ATPase homolog from Schizosaccharomyces pombe (strain 972 / ATCC 24843) (Fission yeast).